The following is a 522-amino-acid chain: MVRSGKNGDLHLKQIAYYKRTGEYHSTTLPSERSGIRRAAKKFVFKEKKLFYVGKDRKQNRLVIVSEEEKKKVLRECHENDSGAHHGISRTLTLVESNYYWTSVTNDVKQWVYACQHCQVAKNTVIVAPKQHLLKVENPWSLVTVDLMGPFHTSNRSHVYAIIMTDLFTKWIVILPLCDVSASEVSKAIINIFFLYGPPQKIIMDQRDEFIQQINIELYRLFGIKQIVISHTSGTVNPTESTPNTIKAFLSKHCADHPNNWDDHLSAVSFAFNVTHLEPTKNTPYFQMFSRNPYMPETSDSLHEVDGDNTSMFAKILDAIKEADKIMENKTTSLGQMENNNLDELNKSKIIVKKKPKQLNPFHLKVGHEVLRQRKNWWKDGRFQSEWVGPCVIDYITESGCAVLRDNTGVRLKRPIKMSHLKPYIRESSEQESLYLLQGSVVADHDYIGLPEIPIGAYQANILVEDATIGIVDNELLTSSKDRELLEYRNTKISPLIDDHSSLEKQTFSLLDSSNQVLEYLS.

The Integrase catalytic domain occupies 135-292; the sequence is KVENPWSLVT…TPYFQMFSRN (158 aa). Ser-502 is subject to Phosphoserine.

In terms of tissue distribution, widely expressed. Also found in tumors originating from parathyroid gland, colon, stomach, bladder, uterus and prostate.

This Homo sapiens (Human) protein is Gypsy retrotransposon integrase-like protein 1 (GIN1).